We begin with the raw amino-acid sequence, 145 residues long: D-aminoacyl-tRNA deacylase (145 aa).

The Gly-cisPro motif, important for rejection of L-amino acids motif lies at 137 to 138 (GP).

The protein belongs to the DTD family. Homodimer.

Its subcellular location is the cytoplasm. It catalyses the reaction glycyl-tRNA(Ala) + H2O = tRNA(Ala) + glycine + H(+). The catalysed reaction is a D-aminoacyl-tRNA + H2O = a tRNA + a D-alpha-amino acid + H(+). In terms of biological role, an aminoacyl-tRNA editing enzyme that deacylates mischarged D-aminoacyl-tRNAs. Also deacylates mischarged glycyl-tRNA(Ala), protecting cells against glycine mischarging by AlaRS. Acts via tRNA-based rather than protein-based catalysis; rejects L-amino acids rather than detecting D-amino acids in the active site. By recycling D-aminoacyl-tRNA to D-amino acids and free tRNA molecules, this enzyme counteracts the toxicity associated with the formation of D-aminoacyl-tRNA entities in vivo and helps enforce protein L-homochirality. The chain is D-aminoacyl-tRNA deacylase from Methylacidiphilum infernorum (isolate V4) (Methylokorus infernorum (strain V4)).